The chain runs to 742 residues: Transcription factor FFUJ_09177 (742 aa).

A DNA-binding region (zn(2)-C6 fungal-type) is located at residues 15 to 41; that stretch reads CVSCARSKQRCDGHSPCGRCSLKNLDC. 2 disordered regions span residues 50–80 and 218–244; these read GQNS…VQSQ and HSLD…SVRD. The segment covering 218 to 240 has biased composition (polar residues); the sequence is HSLDISSYQGQSNQTSPETTSHS.

It is found in the nucleus. Functionally, transcription factor; part of the DMATS1 gene cluster that mediates the biosynthesis of a reversely N-prenylated monomeric L-tryptophan (r-N-DMAT). Seems not to regulate the expression of the DMATS1 cluster. The chain is Transcription factor FFUJ_09177 from Gibberella fujikuroi (strain CBS 195.34 / IMI 58289 / NRRL A-6831) (Bakanae and foot rot disease fungus).